The chain runs to 274 residues: Putative pyruvate, phosphate dikinase regulatory protein 1 (274 aa).

149–156 contacts ADP; it reads GISRTSKT.

This sequence belongs to the pyruvate, phosphate/water dikinase regulatory protein family. PDRP subfamily.

The catalysed reaction is N(tele)-phospho-L-histidyl/L-threonyl-[pyruvate, phosphate dikinase] + ADP = N(tele)-phospho-L-histidyl/O-phospho-L-threonyl-[pyruvate, phosphate dikinase] + AMP + H(+). It catalyses the reaction N(tele)-phospho-L-histidyl/O-phospho-L-threonyl-[pyruvate, phosphate dikinase] + phosphate + H(+) = N(tele)-phospho-L-histidyl/L-threonyl-[pyruvate, phosphate dikinase] + diphosphate. Its function is as follows. Bifunctional serine/threonine kinase and phosphorylase involved in the regulation of the pyruvate, phosphate dikinase (PPDK) by catalyzing its phosphorylation/dephosphorylation. In Listeria welshimeri serovar 6b (strain ATCC 35897 / DSM 20650 / CCUG 15529 / CIP 8149 / NCTC 11857 / SLCC 5334 / V8), this protein is Putative pyruvate, phosphate dikinase regulatory protein 1.